A 273-amino-acid chain; its full sequence is Dermonecrotic toxin LspiSicTox-betaIE1i (273 aa).

Residues glutamate 25 and aspartate 27 each coordinate Mg(2+). The active-site Nucleophile is histidine 41. A disulfide bond links cysteine 45 and cysteine 51. Aspartate 85 contributes to the Mg(2+) binding site.

Belongs to the arthropod phospholipase D family. Class I subfamily. It depends on Mg(2+) as a cofactor. As to expression, expressed by the venom gland.

It is found in the secreted. The catalysed reaction is an N-(acyl)-sphingosylphosphocholine = an N-(acyl)-sphingosyl-1,3-cyclic phosphate + choline. It catalyses the reaction an N-(acyl)-sphingosylphosphoethanolamine = an N-(acyl)-sphingosyl-1,3-cyclic phosphate + ethanolamine. It carries out the reaction a 1-acyl-sn-glycero-3-phosphocholine = a 1-acyl-sn-glycero-2,3-cyclic phosphate + choline. The enzyme catalyses a 1-acyl-sn-glycero-3-phosphoethanolamine = a 1-acyl-sn-glycero-2,3-cyclic phosphate + ethanolamine. Functionally, dermonecrotic toxins cleave the phosphodiester linkage between the phosphate and headgroup of certain phospholipids (sphingolipid and lysolipid substrates), forming an alcohol (often choline) and a cyclic phosphate. This toxin acts on sphingomyelin (SM). It may also act on ceramide phosphoethanolamine (CPE), lysophosphatidylcholine (LPC) and lysophosphatidylethanolamine (LPE), but not on lysophosphatidylserine (LPS), and lysophosphatidylglycerol (LPG). It acts by transphosphatidylation, releasing exclusively cyclic phosphate products as second products. Induces dermonecrosis, hemolysis, increased vascular permeability, edema, inflammatory response, and platelet aggregation. The polypeptide is Dermonecrotic toxin LspiSicTox-betaIE1i (Loxosceles spinulosa (Recluse spider)).